The chain runs to 170 residues: Endoribonuclease YbeY (170 aa).

Zn(2+)-binding residues include H118, H122, and H128.

This sequence belongs to the endoribonuclease YbeY family. It depends on Zn(2+) as a cofactor.

It localises to the cytoplasm. Its function is as follows. Single strand-specific metallo-endoribonuclease involved in late-stage 70S ribosome quality control and in maturation of the 3' terminus of the 16S rRNA. The sequence is that of Endoribonuclease YbeY from Mycobacteroides abscessus (strain ATCC 19977 / DSM 44196 / CCUG 20993 / CIP 104536 / JCM 13569 / NCTC 13031 / TMC 1543 / L948) (Mycobacterium abscessus).